Reading from the N-terminus, the 50-residue chain is Protein PsbN (50 aa).

The chain crosses the membrane as a helical span at residues 14–34; that stretch reads VAVTILAVLLALTGFGLWTAF.

The protein belongs to the PsbN family.

It localises to the cellular thylakoid membrane. Its function is as follows. May play a role in photosystem I and II biogenesis. This chain is Protein PsbN, found in Prochlorococcus marinus subsp. pastoris (strain CCMP1986 / NIES-2087 / MED4).